Consider the following 145-residue polypeptide: 3-hydroxyacyl-[acyl-carrier-protein] dehydratase FabZ (145 aa).

H47 is an active-site residue.

It belongs to the thioester dehydratase family. FabZ subfamily.

The protein resides in the cytoplasm. It carries out the reaction a (3R)-hydroxyacyl-[ACP] = a (2E)-enoyl-[ACP] + H2O. Its function is as follows. Involved in unsaturated fatty acids biosynthesis. Catalyzes the dehydration of short chain beta-hydroxyacyl-ACPs and long chain saturated and unsaturated beta-hydroxyacyl-ACPs. This is 3-hydroxyacyl-[acyl-carrier-protein] dehydratase FabZ from Ruthia magnifica subsp. Calyptogena magnifica.